A 295-amino-acid polypeptide reads, in one-letter code: Probable cell division protein WhiA (295 aa).

The H-T-H motif DNA-binding region spans 262–293 (SLRELGKKLNLTKSQIYSKLKRIIKIAERFGD).

It belongs to the WhiA family.

Functionally, involved in cell division and chromosome segregation. The sequence is that of Probable cell division protein WhiA from Thermotoga maritima (strain ATCC 43589 / DSM 3109 / JCM 10099 / NBRC 100826 / MSB8).